A 464-amino-acid chain; its full sequence is Methylenetetrahydrofolate--tRNA-(uracil-5-)-methyltransferase TrmFO (464 aa).

13-18 (GGGLAG) provides a ligand contact to FAD.

The protein belongs to the MnmG family. TrmFO subfamily. FAD is required as a cofactor.

It is found in the cytoplasm. The catalysed reaction is uridine(54) in tRNA + (6R)-5,10-methylene-5,6,7,8-tetrahydrofolate + NADH + H(+) = 5-methyluridine(54) in tRNA + (6S)-5,6,7,8-tetrahydrofolate + NAD(+). The enzyme catalyses uridine(54) in tRNA + (6R)-5,10-methylene-5,6,7,8-tetrahydrofolate + NADPH + H(+) = 5-methyluridine(54) in tRNA + (6S)-5,6,7,8-tetrahydrofolate + NADP(+). Functionally, catalyzes the folate-dependent formation of 5-methyl-uridine at position 54 (M-5-U54) in all tRNAs. This is Methylenetetrahydrofolate--tRNA-(uracil-5-)-methyltransferase TrmFO from Bartonella bacilliformis (strain ATCC 35685 / KC583 / Herrer 020/F12,63).